The chain runs to 175 residues: NADH-ubiquinone oxidoreductase chain 6 (175 aa).

Transmembrane regions (helical) follow at residues 1–21 (MTMY…VGFS), 25–45 (SPIY…GIVL), 47–67 (FGGS…MLVV), 88–108 (TVFG…YYAL), and 149–169 (YGTW…VVIM).

Belongs to the complex I subunit 6 family. As to quaternary structure, core subunit of respiratory chain NADH dehydrogenase (Complex I) which is composed of 45 different subunits.

The protein resides in the mitochondrion inner membrane. It carries out the reaction a ubiquinone + NADH + 5 H(+)(in) = a ubiquinol + NAD(+) + 4 H(+)(out). In terms of biological role, core subunit of the mitochondrial membrane respiratory chain NADH dehydrogenase (Complex I) which catalyzes electron transfer from NADH through the respiratory chain, using ubiquinone as an electron acceptor. Essential for the catalytic activity and assembly of complex I. This chain is NADH-ubiquinone oxidoreductase chain 6 (MT-ND6), found in Sus scrofa (Pig).